We begin with the raw amino-acid sequence, 286 residues long: Light-independent protochlorophyllide reductase iron-sulfur ATP-binding protein (286 aa).

Residues 10 to 15 (GIGKST) and lysine 39 contribute to the ATP site. Position 14 (serine 14) interacts with Mg(2+). Positions 95 and 129 each coordinate [4Fe-4S] cluster. 180–181 (NR) contacts ATP.

The protein belongs to the NifH/BchL/ChlL family. Homodimer. Protochlorophyllide reductase is composed of three subunits; ChlL, ChlN and ChlB. Requires [4Fe-4S] cluster as cofactor.

It catalyses the reaction chlorophyllide a + oxidized 2[4Fe-4S]-[ferredoxin] + 2 ADP + 2 phosphate = protochlorophyllide a + reduced 2[4Fe-4S]-[ferredoxin] + 2 ATP + 2 H2O. The protein operates within porphyrin-containing compound metabolism; chlorophyll biosynthesis (light-independent). Functionally, component of the dark-operative protochlorophyllide reductase (DPOR) that uses Mg-ATP and reduced ferredoxin to reduce ring D of protochlorophyllide (Pchlide) to form chlorophyllide a (Chlide). This reaction is light-independent. The L component serves as a unique electron donor to the NB-component of the complex, and binds Mg-ATP. The chain is Light-independent protochlorophyllide reductase iron-sulfur ATP-binding protein from Cyanothece sp. (strain PCC 7425 / ATCC 29141).